Consider the following 245-residue polypeptide: MSQSTSVLRRNGFTFKQFFVAHDRCAMKVGTDGILLGAWAPVAGVKRCLDIGAGSGLLALMLAQRTSDSVIIDAVELESEAATQAQENVAQSPWLERINVHTADIQQWVTQQTARFDLIISNPPYYEQGVECATPQREQARYTTSLDHQTLLTCAAECITEEGFFCVVLPEQIGNSFTELALSMGWHLRLRTDVAENEARLPHRVLLAFSPQAGECFSDRLVIRGPDQNYSEAYTALTQAFYLFM.

The protein belongs to the methyltransferase superfamily. tRNA (adenine-N(6)-)-methyltransferase family.

It is found in the cytoplasm. It catalyses the reaction adenosine(37) in tRNA1(Val) + S-adenosyl-L-methionine = N(6)-methyladenosine(37) in tRNA1(Val) + S-adenosyl-L-homocysteine + H(+). In terms of biological role, specifically methylates the adenine in position 37 of tRNA(1)(Val) (anticodon cmo5UAC). The chain is tRNA1(Val) (adenine(37)-N6)-methyltransferase from Escherichia coli O157:H7.